The sequence spans 807 residues: Glycerol-3-phosphate acyltransferase (807 aa).

The short motif at 308 to 313 (CHRSHM) is the HXXXXD motif element.

The protein belongs to the GPAT/DAPAT family.

It is found in the cell inner membrane. The catalysed reaction is sn-glycerol 3-phosphate + an acyl-CoA = a 1-acyl-sn-glycero-3-phosphate + CoA. It functions in the pathway phospholipid metabolism; CDP-diacylglycerol biosynthesis; CDP-diacylglycerol from sn-glycerol 3-phosphate: step 1/3. The sequence is that of Glycerol-3-phosphate acyltransferase from Shewanella sp. (strain MR-4).